Here is a 217-residue protein sequence, read N- to C-terminus: Oxygen-evolving enhancer protein 3, chloroplastic (217 aa).

Disordered stretches follow at residues 1–25 (MAQAMASMTGLSQGVQLPAGPRRAG) and 73–95 (PIKLGPPPPPSGGLPGTLNSDQA). The transit peptide at 1-63 (MAQAMASMTG…ATGIAGGALA (63 aa)) directs the protein to the chloroplast.

Belongs to the PsbQ family.

Its subcellular location is the plastid. The protein resides in the chloroplast thylakoid membrane. The protein is Oxygen-evolving enhancer protein 3, chloroplastic of Oryza sativa subsp. indica (Rice).